The following is a 343-amino-acid chain: Protein RecA (343 aa).

Residue 64–71 (GPESSGKT) coordinates ATP.

This sequence belongs to the RecA family.

It localises to the cytoplasm. Can catalyze the hydrolysis of ATP in the presence of single-stranded DNA, the ATP-dependent uptake of single-stranded DNA by duplex DNA, and the ATP-dependent hybridization of homologous single-stranded DNAs. It interacts with LexA causing its activation and leading to its autocatalytic cleavage. The protein is Protein RecA of Bacillus cereus (strain ATCC 10987 / NRS 248).